Here is a 190-residue protein sequence, read N- to C-terminus: Orotate phosphoribosyltransferase (190 aa).

A 5-phospho-alpha-D-ribose 1-diphosphate-binding site is contributed by 114-122; that stretch reads EDVITTGGS. T118 and R146 together coordinate orotate.

This sequence belongs to the purine/pyrimidine phosphoribosyltransferase family. PyrE subfamily. As to quaternary structure, homodimer. It depends on Mg(2+) as a cofactor.

It catalyses the reaction orotidine 5'-phosphate + diphosphate = orotate + 5-phospho-alpha-D-ribose 1-diphosphate. It participates in pyrimidine metabolism; UMP biosynthesis via de novo pathway; UMP from orotate: step 1/2. In terms of biological role, catalyzes the transfer of a ribosyl phosphate group from 5-phosphoribose 1-diphosphate to orotate, leading to the formation of orotidine monophosphate (OMP). This Caldicellulosiruptor bescii (strain ATCC BAA-1888 / DSM 6725 / KCTC 15123 / Z-1320) (Anaerocellum thermophilum) protein is Orotate phosphoribosyltransferase.